A 109-amino-acid chain; its full sequence is Large ribosomal subunit protein uL24 (109 aa).

This sequence belongs to the universal ribosomal protein uL24 family. In terms of assembly, part of the 50S ribosomal subunit.

In terms of biological role, one of two assembly initiator proteins, it binds directly to the 5'-end of the 23S rRNA, where it nucleates assembly of the 50S subunit. Functionally, one of the proteins that surrounds the polypeptide exit tunnel on the outside of the subunit. In Desulforapulum autotrophicum (strain ATCC 43914 / DSM 3382 / VKM B-1955 / HRM2) (Desulfobacterium autotrophicum), this protein is Large ribosomal subunit protein uL24.